A 201-amino-acid polypeptide reads, in one-letter code: NAD(P)H-dependent FMN reductase ntnL (201 aa).

Residues Arg12, 90 to 93 (EYNG), and Tyr120 contribute to the FMN site.

Homodimer.

The enzyme catalyses FMNH2 + NADP(+) = FMN + NADPH + 2 H(+). It carries out the reaction FMNH2 + NAD(+) = FMN + NADH + 2 H(+). It functions in the pathway secondary metabolite biosynthesis; terpenoid biosynthesis. Its function is as follows. NAD(P)H-dependent FMN reductase; part of the gene cluster that mediates the biosynthesis of the meroterpenoids nectripenoids A and B, as well as cochliquninone D and isocochliquninone E. The pathway probably begins with the HR-PKS ntnH that catalyzes two chain-extension steps to form a reduced triketide, which then primes the SAT domain in the NR-PKS ntnG to initiate three more cycles of extension to give a linear hexaketide corresponding to the polyketide part of nectripenoids. The FAD-dependent monooxygenase ntnJ then performs an oxidative decarboxylation at C11 of the ntnH/ntnG product, via an electrophilic aromatic hydroxylation with concomitant ipso-decarboxylation. The membrane-bound polyprenyl transferase ntnF then introduces a farnesyl group before the FAD-dependent monooxygenase ntnK functions as the first epoxidase on terminal C12'-C13' olefin, followed by a second epoxidation on C7'-C8' catalyzed by ntnA. The terpene cyclase/mutase ntnI then initiates the sequential tricyclic ring formation through protonation of the terminal epoxide and catalyzes the regioselective and stereoselective 6/6/6-tricyclic ring formation. The cytochrome P450 monooxygenase ntnM may then hydroxylate C1'. The chain is NAD(P)H-dependent FMN reductase ntnL from Nectria sp.